The sequence spans 434 residues: D-amino acid dehydrogenase (434 aa).

3–17 (VIVLGSGVIGTTTAY) contacts FAD.

Belongs to the DadA oxidoreductase family. Requires FAD as cofactor.

The catalysed reaction is a D-alpha-amino acid + A + H2O = a 2-oxocarboxylate + AH2 + NH4(+). In terms of biological role, oxidative deamination of D-amino acids. The polypeptide is D-amino acid dehydrogenase (Bordetella bronchiseptica (strain ATCC BAA-588 / NCTC 13252 / RB50) (Alcaligenes bronchisepticus)).